Reading from the N-terminus, the 303-residue chain is MSATQAAPARDRLRIAIQKSGRLAEPARNLLSACGLSWRESRDKLFCYGESLPVDLLLVRDDDIPGLIADGVCDLGIVGRNELDEQAAARRQIGLPDAYQALRGLGFGQCRLMLAVPEEWQWQGPAQLAGTRIATSYPAILKQWLAEQGVDAQVVELSGSVEIAPRLGTADLICDLVSSGATLRANQLAPVHNLLDSEAVLAGAVRAPDDARGALRSMLLRRLDGVVQRQDRKLLMFRASEDRVDALAQLLVDAEPLVRLPADGGALRLQTMCPGPLSWQRMEELERAGAQGLMVLSVERSLA.

It belongs to the ATP phosphoribosyltransferase family. Long subfamily. Mg(2+) is required as a cofactor.

It is found in the cytoplasm. The catalysed reaction is 1-(5-phospho-beta-D-ribosyl)-ATP + diphosphate = 5-phospho-alpha-D-ribose 1-diphosphate + ATP. The protein operates within amino-acid biosynthesis; L-histidine biosynthesis; L-histidine from 5-phospho-alpha-D-ribose 1-diphosphate: step 1/9. With respect to regulation, feedback inhibited by histidine. Functionally, catalyzes the condensation of ATP and 5-phosphoribose 1-diphosphate to form N'-(5'-phosphoribosyl)-ATP (PR-ATP). Has a crucial role in the pathway because the rate of histidine biosynthesis seems to be controlled primarily by regulation of HisG enzymatic activity. This Stenotrophomonas maltophilia (strain R551-3) protein is ATP phosphoribosyltransferase.